An 83-amino-acid polypeptide reads, in one-letter code: Small ribosomal subunit protein bS16 (83 aa).

The protein belongs to the bacterial ribosomal protein bS16 family.

The polypeptide is Small ribosomal subunit protein bS16 (Aromatoleum aromaticum (strain DSM 19018 / LMG 30748 / EbN1) (Azoarcus sp. (strain EbN1))).